The following is a 215-amino-acid chain: Deoxyribose-phosphate aldolase (215 aa).

D90 acts as the Proton donor/acceptor in catalysis. Catalysis depends on K152, which acts as the Schiff-base intermediate with acetaldehyde. The Proton donor/acceptor role is filled by K181.

It belongs to the DeoC/FbaB aldolase family. DeoC type 1 subfamily.

The protein resides in the cytoplasm. The catalysed reaction is 2-deoxy-D-ribose 5-phosphate = D-glyceraldehyde 3-phosphate + acetaldehyde. The protein operates within carbohydrate degradation; 2-deoxy-D-ribose 1-phosphate degradation; D-glyceraldehyde 3-phosphate and acetaldehyde from 2-deoxy-alpha-D-ribose 1-phosphate: step 2/2. In terms of biological role, catalyzes a reversible aldol reaction between acetaldehyde and D-glyceraldehyde 3-phosphate to generate 2-deoxy-D-ribose 5-phosphate. In Ureaplasma urealyticum serovar 10 (strain ATCC 33699 / Western), this protein is Deoxyribose-phosphate aldolase.